The chain runs to 507 residues: Extracellular elastase (507 aa).

Residues 1–28 form the signal peptide; the sequence is MKNFSKFALTSIAALTVASPLVNTEVDA. A propeptide spanning residues 29 to 207 is cleaved from the precursor; sequence KDKVSATQNI…VVDKLNMIKE (179 aa). Aspartate 347 serves as a coordination point for Ca(2+). Residue histidine 351 coordinates Zn(2+). Glutamate 352 is an active-site residue. Residues histidine 355 and glutamate 375 each coordinate Zn(2+). Residues aspartate 386, glutamate 388, aspartate 389, leucine 391, glutamate 394, tyrosine 397, threonine 398, valine 401, and aspartate 404 each contribute to the Ca(2+) site. Catalysis depends on histidine 435, which acts as the Proton donor.

It belongs to the peptidase M4 family. It depends on Ca(2+) as a cofactor. Requires Zn(2+) as cofactor.

Its subcellular location is the secreted. Protease that has a low substrate specificity. Glucagon is preferentially cleaved between aromatic (Phe) and hydrophobic (Val) amino acids. Hydrolyzes casein and elastin. This chain is Extracellular elastase (sepA), found in Staphylococcus epidermidis (strain ATCC 12228 / FDA PCI 1200).